A 309-amino-acid polypeptide reads, in one-letter code: Foldase protein PrsA 2 (309 aa).

A signal peptide spans 1-20 (MKYRLIGVGASLVVAVMLTG). Cys21 carries the N-palmitoyl cysteine lipid modification. Cys21 carries S-diacylglycerol cysteine lipidation. Residues 137 to 232 (MPMTTVQHIA…TADTKDKPTY (96 aa)) enclose the PpiC domain.

Belongs to the PrsA family.

The protein resides in the cell membrane. The catalysed reaction is [protein]-peptidylproline (omega=180) = [protein]-peptidylproline (omega=0). Plays a major role in protein secretion by helping the post-translocational extracellular folding of several secreted proteins. The protein is Foldase protein PrsA 2 (prsA2) of Lactiplantibacillus plantarum (strain ATCC BAA-793 / NCIMB 8826 / WCFS1) (Lactobacillus plantarum).